Here is a 226-residue protein sequence, read N- to C-terminus: Thymidylate kinase (226 aa).

9-16 (GPEGSGKS) serves as a coordination point for ATP.

Belongs to the thymidylate kinase family.

The catalysed reaction is dTMP + ATP = dTDP + ADP. Functionally, phosphorylation of dTMP to form dTDP in both de novo and salvage pathways of dTTP synthesis. The chain is Thymidylate kinase from Roseiflexus sp. (strain RS-1).